Reading from the N-terminus, the 676-residue chain is KVSDSAYSNSCSNSQSQRSGSSKSRLSGSHSSGSSGYGGKPSTQASSSDMIIKRNKDKSRKKKKNKGAGQGAGQAQTLISASTSLEGRDEEKPRPSGTGCVEQQICRELQDQQHGEDHSEPQATEQLQQEEEDQSGSESEADRVEGVAKSEAAQSFPIPSPLSVTIVPPSMGGCGGVGHAAGLDSGLAKFDKTWEAGPGKLESMTGVGAAAAGTGQRGERVKEDSFCCVISMHDGIVLYTTPSITDVLGYPRDMWLGRSFIDFVHLKDRATFASQITTGIPIAESRGSVPKDAKSTFCVMLRRYRGLKSGGFGVIGRPVSYEPFRLGLTFREAPEEARPDNYMVSNGTNMLLVICATPIKSSYKVPDEILSQKSPKFAIRHTATGIISHVDSAAVSALGYLPQDLIGRSIMDFYHHEDLSVMKETYETVMKKGQTAGASFCSKPYRFLIQNGCYVLLETEWTSFVNPWSRKLEFVVGHHRVFQGPKQCNVFEAAPTCKLKISEEAQSRNTRIKEDIVKRLAETVSRPSDTVKQEVSRRCQALASFMETLMDEVSRADLKEGSGGSGSSGNFTTASNIHMSSVTNTSIAGTGGTGTGTGTGTGTGTGTGTGTGTGTGTGTGTGTGTGTGTGTGTGTGTGTGTGNGTNSCTGTGTTSSSRGGSAAIPPVTLTESLLNK.

Low complexity predominate over residues Lys1–Ser34. A disordered region spans residues Lys1 to Pro161. The short motif at Lys53–Lys66 is the Nuclear localization signal element. Positions Lys53–Lys66 are enriched in basic residues. Residues Glu108–Glu120 are compositionally biased toward basic and acidic residues. PAS domains are found at residues Asp224–Ile359 and Phe377–Gln483. Residues Thr583 to Lys676 form a disordered region. 26 consecutive repeat copies span residues Gly589–Thr590, Gly592–Thr593, Gly594–Thr595, Gly596–Thr597, Gly598–Thr599, Gly600–Thr601, Gly602–Thr603, Gly604–Thr605, Gly606–Thr607, Gly608–Thr609, Gly610–Thr611, Gly612–Thr613, Gly614–Thr615, Gly616–Thr617, Gly618–Thr619, Gly620–Thr621, Gly622–Thr623, Gly624–Thr625, Gly626–Thr627, Gly628–Thr629, Gly630–Thr631, Gly632–Thr633, Gly634–Thr635, Gly636–Thr637, Gly638–Thr639, and Gly640–Thr641. Over residues Gly589–Asn643 the composition is skewed to gly residues. Residues Gly589 to Thr645 are 28 X 2 AA approximate tandem repeats of G-T. The 27; approximate repeat unit spans residues Gly642 to Asn643. The stretch at Gly644–Thr645 is repeat 28. Residues Gly644–Thr654 are compositionally biased toward low complexity.

In terms of assembly, forms a heterodimer with timeless (TIM); the complex then translocates into the nucleus. In terms of processing, phosphorylated with a circadian rhythmicity, probably by the double-time protein (dbt). Phosphorylation could be implicated in the stability of per monomer and in the formation of heterodimer per-tim.

The protein resides in the nucleus. The protein localises to the cytoplasm. It is found in the perinuclear region. Essential for biological clock functions. Determines the period length of circadian and ultradian rhythms; an increase in PER dosage leads to shortened circadian rhythms and a decrease leads to lengthened circadian rhythms. Essential for the circadian rhythmicity of locomotor activity, eclosion behavior, and for the rhythmic component of the male courtship song that originates in the thoracic nervous system. The biological cycle depends on the rhythmic formation and nuclear localization of the TIM-PER complex. Light induces the degradation of TIM, which promotes elimination of PER. Nuclear activity of the heterodimer coordinatively regulates PER and TIM transcription through a negative feedback loop. Behaves as a negative element in circadian transcriptional loop. Does not appear to bind DNA, suggesting indirect transcriptional inhibition. The sequence is that of Period circadian protein (per) from Drosophila mauritiana (Fruit fly).